The following is a 599-amino-acid chain: Estrogen receptor (599 aa).

The tract at residues 1–188 (MTMTLHTKAS…IMESAKETRY (188 aa)) is modulating (transactivation AF-1); mediates interaction with MACROD1. A glycan (O-linked (GlcNAc) serine) is linked at serine 10. The segment at 35-47 (MERALGEVYVDNS) is required for interaction with NCOA1. The interaction with DDX5; self-association stretch occupies residues 35–178 (MERALGEVYV…LSSSNEKGNM (144 aa)). The O-linked (GlcNAc) threonine glycan is linked to threonine 50. Phosphoserine; by CDK2 is present on residues serine 108 and serine 110. Serine 122 carries the post-translational modification Phosphoserine. The interval 147–175 (DTGPPAFYRSNSDNRRQNGRERLSSSNEK) is disordered. Residues 158–169 (SDNRRQNGRERL) are compositionally biased toward basic and acidic residues. Serine 171 bears the Phosphoserine; by CK2 mark. 2 consecutive NR C4-type zinc fingers follow at residues 189-209 (CAVC…CEGC) and 225-249 (CPAT…LRKC). Positions 189 to 254 (CAVCNDYASG…RLRKCYEVGM (66 aa)) form a DNA-binding region, nuclear receptor. A mediates interaction with DNTTIP2 region spans residues 189–314 (CAVCNDYASG…TKKNSPALSL (126 aa)). The interval 255-314 (MKGGIRKDRRGGRMLKHKRQRDDLEGRNEMGASGDMRAANLWPSPLVIKHTKKNSPALSL) is hinge. The residue at position 264 (arginine 264) is an Asymmetric dimethylarginine; by PRMT1. An interaction with AKAP13 region spans residues 266-599 (GRMLKHKRQR…PEAEGFPNTI (334 aa)). The tract at residues 268–599 (MLKHKRQRDD…PEAEGFPNTI (332 aa)) is self-association. One can recognise an NR LBD domain in the interval 315 to 551 (TADQMVSALL…DLLLEMLDAH (237 aa)). A transactivation AF-2 region spans residues 315–599 (TADQMVSALL…PEAEGFPNTI (285 aa)). The 17beta-estradiol site is built by glutamate 357 and arginine 398. Residue cysteine 451 is the site of S-palmitoyl cysteine attachment. Histidine 528 contacts 17beta-estradiol. Residue tyrosine 541 is modified to Phosphotyrosine; by Tyr-kinases. The segment at 557-581 (ASRMGVPPEEPSQTQLATTSSTSAH) is disordered. Positions 568–581 (SQTQLATTSSTSAH) are enriched in low complexity. O-linked (GlcNAc) threonine glycosylation occurs at threonine 575.

Belongs to the nuclear hormone receptor family. NR3 subfamily. Interacts with BCAS3. Binds DNA as a homodimer. Can form a heterodimer with ESR2. Interacts with coactivator NCOA5. Interacts with PELP1, the interaction is enhanced by 17-beta-estradiol; the interaction increases ESR1 transcriptional activity. Interacts with NCOA7; the interaction is ligand-inducible. Interacts with AKAP13, CUEDC2, HEXIM1, KDM5A, MAP1S, SMARD1, and UBE1C. Interacts with MUC1; the interaction is stimulated by 7 beta-estradiol (E2) and enhances ESR1-mediated transcription. Interacts with DNTTIP2, and UIMC1. Interacts with KMT2D/MLL2. Interacts with ATAD2; the interaction is enhanced by estradiol. Interacts with KIF18A and LDB1. Interacts with RLIM (via its C-terminus). Interacts with MACROD1. Interacts with SH2D4A and PLCG. Interacts with SH2D4A; the interaction blocks binding to PLCG and inhibits estrogen-induced cell proliferation. Interacts with DYNLL1. Interacts with CCDC62; the interaction requires estradiol and appears to enhance the transcription of target genes. Interacts with NR2C1; the interaction prevents homodimerization of ESR1 and suppresses its transcriptional activity and cell growth. Interacts with DNAAF4. Interacts with PRMT2. Interacts with RBFOX2. Interacts with EP300; the interaction is estrogen-dependent and enhanced by CITED1. Interacts with CITED1; the interaction is estrogen-dependent. Interacts with FAM120B, FOXL2, PHB2 and SLC30A9. Interacts with coactivators NCOA3 and NCOA6. Interacts with STK3/MST2 only in the presence of SAV1 and vice-versa. Binds to CSNK1D. Interacts with NCOA2; NCOA2 can interact with ESR1 AF-1 and AF-2 domains simultaneously and mediate their transcriptional synergy. Interacts with DDX5. Interacts with NCOA1; the interaction seems to require a self-association of N-terminal and C-terminal regions. Interacts with ZNF366, DDX17, NFKB1, RELA, SP1 and SP3. Interacts with NRIP1. Interacts with GPER1; the interaction occurs in an estrogen-dependent manner. Interacts with CLOCK and the interaction is stimulated by estrogen. Interacts with BCAS3. Interacts with TRIP4 (ufmylated); estrogen dependent. Interacts with LMTK3; the interaction phosphorylates ESR1 (in vitro) and protects it against proteasomal degradation. Interacts with CCAR2 (via N-terminus) in a ligand-independent manner. Interacts with ZFHX3. Interacts with SFR1 in a ligand-dependent and -independent manner. Interacts with DCAF13, LATS1 and DCAF1; regulates ESR1 ubiquitination and ubiquitin-mediated proteasomal degradation. Interacts (via DNA-binding domain) with POU4F2 isoform 2 (C-terminus); this interaction increases the estrogen receptor ESR1 transcriptional activity in a DNA- and ligand 17-beta-estradiol-independent manner. Interacts with ESRRB isoform 1. Interacts with UBE3A and WBP2. Interacts with GTF2B. Interacts with RBM39. In the absence of hormonal ligand, interacts with TACC1. Interacts with PI3KR1 or PI3KR2 and PTK2/FAK1. Interacts with SRC. Interacts with BAG1; the interaction is promoted in the absence of estradiol (17-beta-estradiol/E2). Interacts with and ubiquitinated by STUB1; the interaction is promoted in the absence of estradiol (17-beta-estradiol/E2). Interacts with NEDD8. Phosphorylated by cyclin A/CDK2 and CK1. Phosphorylation probably enhances transcriptional activity. Dephosphorylation at Ser-122 by PPP5C inhibits its transactivation activity. Phosphorylated by LMTK3 (in vitro). Post-translationally, ubiquitinated. Deubiquitinated by OTUB1. In terms of processing, palmitoylated at Cys-451 by ZDHHC7 and ZDHHC21. This modification is required for plasma membrane targeting and for rapid intracellular signaling via ERK and AKT kinases and cAMP generation, but not for signaling mediated by the nuclear hormone receptor. Ubiquitinated; regulated by LATS1 via DCAF1 it leads to ESR1 proteasomal degradation. Deubiquitinated by OTUB1. Ubiquitinated by STUB1/CHIP; in the CA1 hippocampal region following loss of endogenous circulating estradiol (17-beta-estradiol/E2). Ubiquitinated by UBR5, leading to its degradation: UBR5 specifically recognizes and binds ligand-bound ESR1 when it is not associated with coactivators (NCOAs). In presence of NCOAs, the UBR5-degron is not accessible, preventing its ubiquitination and degradation. Post-translationally, dimethylated by PRMT1 at Arg-264. The methylation may favor cytoplasmic localization. Demethylated by JMJD6 at Arg-264.

It localises to the nucleus. The protein resides in the cytoplasm. It is found in the golgi apparatus. The protein localises to the cell membrane. In terms of biological role, nuclear hormone receptor. The steroid hormones and their receptors are involved in the regulation of eukaryotic gene expression and affect cellular proliferation and differentiation in target tissues. Ligand-dependent nuclear transactivation involves either direct homodimer binding to a palindromic estrogen response element (ERE) sequence or association with other DNA-binding transcription factors, such as AP-1/c-Jun, c-Fos, ATF-2, Sp1 and Sp3, to mediate ERE-independent signaling. Ligand binding induces a conformational change allowing subsequent or combinatorial association with multiprotein coactivator complexes through LXXLL motifs of their respective components. Mutual transrepression occurs between the estrogen receptor (ER) and NF-kappa-B in a cell-type specific manner. Decreases NF-kappa-B DNA-binding activity and inhibits NF-kappa-B-mediated transcription from the IL6 promoter and displace RELA/p65 and associated coregulators from the promoter. Recruited to the NF-kappa-B response element of the CCL2 and IL8 promoters and can displace CREBBP. Present with NF-kappa-B components RELA/p65 and NFKB1/p50 on ERE sequences. Can also act synergistically with NF-kappa-B to activate transcription involving respective recruitment adjacent response elements; the function involves CREBBP. Can activate the transcriptional activity of TFF1. Also mediates membrane-initiated estrogen signaling involving various kinase cascades. Essential for MTA1-mediated transcriptional regulation of BRCA1 and BCAS3. Maintains neuronal survival in response to ischemic reperfusion injury when in the presence of circulating estradiol (17-beta-estradiol/E2). The polypeptide is Estrogen receptor (Esr1) (Mus musculus (Mouse)).